Here is a 421-residue protein sequence, read N- to C-terminus: Gamma-glutamyl phosphate reductase (421 aa).

Belongs to the gamma-glutamyl phosphate reductase family.

It localises to the cytoplasm. It carries out the reaction L-glutamate 5-semialdehyde + phosphate + NADP(+) = L-glutamyl 5-phosphate + NADPH + H(+). It functions in the pathway amino-acid biosynthesis; L-proline biosynthesis; L-glutamate 5-semialdehyde from L-glutamate: step 2/2. Functionally, catalyzes the NADPH-dependent reduction of L-glutamate 5-phosphate into L-glutamate 5-semialdehyde and phosphate. The product spontaneously undergoes cyclization to form 1-pyrroline-5-carboxylate. In Acinetobacter baumannii (strain ATCC 17978 / DSM 105126 / CIP 53.77 / LMG 1025 / NCDC KC755 / 5377), this protein is Gamma-glutamyl phosphate reductase.